A 510-amino-acid chain; its full sequence is Cytochrome P450 703A2 (510 aa).

Residues 2–22 (ILVLASLFAVLILNVLLWRWL) traverse the membrane as a helical segment. Residue C451 coordinates heme.

This sequence belongs to the cytochrome P450 family. Heme is required as a cofactor.

It is found in the membrane. It carries out the reaction dodecanoate + reduced [NADPH--hemoprotein reductase] + O2 = 7-hydroxydodecanoate + oxidized [NADPH--hemoprotein reductase] + H2O + H(+). In terms of biological role, involved in pollen wall development. Catalyzes the conversion of medium-chain saturated fatty acids to the corresponding monohydroxylated fatty acids, with a preferential hydroxylation of lauric acid at the C-7 position. In-chain hydroxylated fatty acids, together with omega-hydroxylated fatty acids, are key monomeric aliphatic building blocks for sporopollenin synthesis during exine formation. This chain is Cytochrome P450 703A2, found in Arabidopsis thaliana (Mouse-ear cress).